A 438-amino-acid polypeptide reads, in one-letter code: Serine hydroxymethyltransferase (438 aa).

(6S)-5,6,7,8-tetrahydrofolate is bound by residues L135 and G139 to L141. N6-(pyridoxal phosphate)lysine is present on K244. The disordered stretch occupies residues G361 to T383.

This sequence belongs to the SHMT family. As to quaternary structure, homodimer. It depends on pyridoxal 5'-phosphate as a cofactor.

Its subcellular location is the cytoplasm. The catalysed reaction is (6R)-5,10-methylene-5,6,7,8-tetrahydrofolate + glycine + H2O = (6S)-5,6,7,8-tetrahydrofolate + L-serine. It functions in the pathway one-carbon metabolism; tetrahydrofolate interconversion. The protein operates within amino-acid biosynthesis; glycine biosynthesis; glycine from L-serine: step 1/1. Functionally, catalyzes the reversible interconversion of serine and glycine with tetrahydrofolate (THF) serving as the one-carbon carrier. This reaction serves as the major source of one-carbon groups required for the biosynthesis of purines, thymidylate, methionine, and other important biomolecules. Also exhibits THF-independent aldolase activity toward beta-hydroxyamino acids, producing glycine and aldehydes, via a retro-aldol mechanism. In Rhizorhabdus wittichii (strain DSM 6014 / CCUG 31198 / JCM 15750 / NBRC 105917 / EY 4224 / RW1) (Sphingomonas wittichii), this protein is Serine hydroxymethyltransferase.